We begin with the raw amino-acid sequence, 815 residues long: ABC transporter G family member 7 (815 aa).

Disordered regions lie at residues 81–141 and 177–249; these read NNID…TPNF and KQIK…TNGK. A coiled-coil region spans residues 164 to 199; sequence ENISYKTENRNYKKQIKDEKKRKKKLEMERSNSSNS. Residues 194-210 are compositionally biased toward low complexity; it reads SNSSNSNSSYDVESSAS. Over residues 211–248 the composition is skewed to polar residues; the sequence is GLQTPQQSRSSILPTNSLNISKIDQSMNPQQTRSTTNG. The region spanning 242 to 485 is the ABC transporter domain; sequence TRSTTNGKIE…SLPNQYQCPN (244 aa). 274 to 281 is a binding site for ATP; sequence GPSGSGKS. The 249-residue stretch at 562–810 folds into the ABC transmembrane type-2 domain; sequence TQYITRLSGG…VSGYWAISKL (249 aa). 7 helical membrane passes run 568–588, 598–618, 647–667, 675–695, 706–726, 732–752, and 788–808; these read LSGG…LSPS, ILFF…TLFL, AFIQ…INHL, FITY…IIAI, FIYG…LVPV, SFGW…VMVA, and GIGI…WAIS.

Belongs to the ABC transporter superfamily. ABCG family.

It localises to the membrane. In Dictyostelium discoideum (Social amoeba), this protein is ABC transporter G family member 7 (abcG7).